The sequence spans 354 residues: Dye-decolorizing peroxidase (354 aa).

Asp-165 functions as the Proton acceptor in the catalytic mechanism. His-238 is a heme binding site. The segment at 312–335 (GLFFSPTVDFLDDPPPLPAPGTPA) is targeting peptide. Residues 324–337 (DPPPLPAPGTPAAP) show a composition bias toward pro residues. Positions 324–354 (DPPPLPAPGTPAAPPARNGSLSIGSLKGTTR) are disordered. Polar residues predominate over residues 342–354 (GSLSIGSLKGTTR).

It belongs to the DyP-type peroxidase family. Found in a complex with type 1 encapsulin, strongly suggesting it is found in a type 1 encapsulin nanocompartment. Homotetramer, presumably also in the type 1 encapsulin nanocompartment. Heme b serves as cofactor.

It localises to the encapsulin nanocompartment. The protein resides in the cell membrane. The catalysed reaction is 2 a phenolic donor + H2O2 = 2 a phenolic radical donor + 2 H2O. Its function is as follows. Cargo protein of a type 1 encapsulin nanocompartment. A heme-dependent peroxidase. This cargo-loaded encapsulin nanocompartment is probably involved in protection against oxidative damage. This Mycolicibacterium paratuberculosis (strain ATCC BAA-968 / K-10) (Mycobacterium paratuberculosis) protein is Dye-decolorizing peroxidase.